The sequence spans 182 residues: ATP synthase subunit b, chloroplastic (182 aa).

A helical membrane pass occupies residues 29–47 (IINLALLIVLVINVAKDVL).

The protein belongs to the ATPase B chain family. In terms of assembly, F-type ATPases have 2 components, F(1) - the catalytic core - and F(0) - the membrane proton channel. F(1) has five subunits: alpha(3), beta(3), gamma(1), delta(1), epsilon(1). F(0) has four main subunits: a(1), b(1), b'(1) and c(10-14). The alpha and beta chains form an alternating ring which encloses part of the gamma chain. F(1) is attached to F(0) by a central stalk formed by the gamma and epsilon chains, while a peripheral stalk is formed by the delta, b and b' chains.

The protein localises to the plastid. Its subcellular location is the chloroplast thylakoid membrane. In terms of biological role, f(1)F(0) ATP synthase produces ATP from ADP in the presence of a proton or sodium gradient. F-type ATPases consist of two structural domains, F(1) containing the extramembraneous catalytic core and F(0) containing the membrane proton channel, linked together by a central stalk and a peripheral stalk. During catalysis, ATP synthesis in the catalytic domain of F(1) is coupled via a rotary mechanism of the central stalk subunits to proton translocation. Functionally, component of the F(0) channel, it forms part of the peripheral stalk, linking F(1) to F(0). The chain is ATP synthase subunit b, chloroplastic from Heterosigma akashiwo (strain NIES-293 / 8280G21-1).